Reading from the N-terminus, the 235-residue chain is Glycerol-3-phosphate acyltransferase (235 aa).

The next 6 membrane-spanning stretches (helical) occupy residues 4–24, 56–76, 94–114, 126–146, 152–172, and 194–214; these read LLAI…IMAG, TVTL…VAFF, LLAG…GFKG, IGIA…TVWF, VASI…KYVF, and SLDY…LFTH.

This sequence belongs to the PlsY family. Probably interacts with PlsX.

It is found in the cell inner membrane. The enzyme catalyses an acyl phosphate + sn-glycerol 3-phosphate = a 1-acyl-sn-glycero-3-phosphate + phosphate. It participates in lipid metabolism; phospholipid metabolism. In terms of biological role, catalyzes the transfer of an acyl group from acyl-phosphate (acyl-PO(4)) to glycerol-3-phosphate (G3P) to form lysophosphatidic acid (LPA). This enzyme utilizes acyl-phosphate as fatty acyl donor, but not acyl-CoA or acyl-ACP. The sequence is that of Glycerol-3-phosphate acyltransferase from Chlorobium phaeovibrioides (strain DSM 265 / 1930) (Prosthecochloris vibrioformis (strain DSM 265)).